A 395-amino-acid polypeptide reads, in one-letter code: Putative nickel insertion protein (395 aa).

This sequence belongs to the LarC family.

The protein is Putative nickel insertion protein of Roseiflexus castenholzii (strain DSM 13941 / HLO8).